Here is a 131-residue protein sequence, read N- to C-terminus: Fluoride-specific ion channel FluC 1 (131 aa).

The next 3 membrane-spanning stretches (helical) occupy residues 38-58, 69-89, and 108-128; these read FPLSTLVINGVASLCAGIAMM, TVMMFVVGFLGGFSTFSTALN, and IATVAVPLICVAAGFGIALLA. Residues G79 and S82 each contribute to the Na(+) site.

This sequence belongs to the fluoride channel Fluc/FEX (TC 1.A.43) family.

It is found in the cell membrane. The catalysed reaction is fluoride(in) = fluoride(out). With respect to regulation, na(+) is not transported, but it plays an essential structural role and its presence is essential for fluoride channel function. Its function is as follows. Fluoride-specific ion channel. Important for reducing fluoride concentration in the cell, thus reducing its toxicity. The sequence is that of Fluoride-specific ion channel FluC 1 from Bifidobacterium longum (strain NCC 2705).